We begin with the raw amino-acid sequence, 347 residues long: N-acetyl-gamma-glutamyl-phosphate reductase (347 aa).

C152 is a catalytic residue.

This sequence belongs to the NAGSA dehydrogenase family. Type 1 subfamily.

Its subcellular location is the cytoplasm. The enzyme catalyses N-acetyl-L-glutamate 5-semialdehyde + phosphate + NADP(+) = N-acetyl-L-glutamyl 5-phosphate + NADPH + H(+). It participates in amino-acid biosynthesis; L-arginine biosynthesis; N(2)-acetyl-L-ornithine from L-glutamate: step 3/4. In terms of biological role, catalyzes the NADPH-dependent reduction of N-acetyl-5-glutamyl phosphate to yield N-acetyl-L-glutamate 5-semialdehyde. This chain is N-acetyl-gamma-glutamyl-phosphate reductase, found in Neisseria gonorrhoeae (strain ATCC 700825 / FA 1090).